The chain runs to 94 residues: Small ribosomal subunit protein bS20 (94 aa).

Residues 1–10 are compositionally biased toward basic and acidic residues; that stretch reads MANHASADKR. The segment at 1–20 is disordered; it reads MANHASADKRNRQRITRTAR. Residues 11-20 show a composition bias toward basic residues; it reads NRQRITRTAR.

The protein belongs to the bacterial ribosomal protein bS20 family.

Binds directly to 16S ribosomal RNA. The polypeptide is Small ribosomal subunit protein bS20 (Sorangium cellulosum (strain So ce56) (Polyangium cellulosum (strain So ce56))).